Here is a 102-residue protein sequence, read N- to C-terminus: NADH-quinone oxidoreductase subunit K (102 aa).

3 helical membrane passes run 5–25 (LSHY…GIFL), 31–51 (IVIL…MVAF), and 65–85 (LFIL…LVVF).

The protein belongs to the complex I subunit 4L family. NDH-1 is composed of 14 different subunits. Subunits NuoA, H, J, K, L, M, N constitute the membrane sector of the complex.

Its subcellular location is the cell inner membrane. It carries out the reaction a quinone + NADH + 5 H(+)(in) = a quinol + NAD(+) + 4 H(+)(out). Functionally, NDH-1 shuttles electrons from NADH, via FMN and iron-sulfur (Fe-S) centers, to quinones in the respiratory chain. The immediate electron acceptor for the enzyme in this species is believed to be ubiquinone. Couples the redox reaction to proton translocation (for every two electrons transferred, four hydrogen ions are translocated across the cytoplasmic membrane), and thus conserves the redox energy in a proton gradient. The chain is NADH-quinone oxidoreductase subunit K from Rhizobium johnstonii (strain DSM 114642 / LMG 32736 / 3841) (Rhizobium leguminosarum bv. viciae).